We begin with the raw amino-acid sequence, 408 residues long: Acetate kinase (408 aa).

Asparagine 7 is a binding site for Mg(2+). Lysine 14 provides a ligand contact to ATP. A substrate-binding site is contributed by arginine 91. Catalysis depends on aspartate 148, which acts as the Proton donor/acceptor. Residues 208 to 212 (HLGNG), 283 to 285 (DFR), and 331 to 335 (GIGEN) contribute to the ATP site. Mg(2+) is bound at residue glutamate 384.

It belongs to the acetokinase family. In terms of assembly, homodimer. Mg(2+) is required as a cofactor. The cofactor is Mn(2+).

It localises to the cytoplasm. The catalysed reaction is acetate + ATP = acetyl phosphate + ADP. Its pathway is metabolic intermediate biosynthesis; acetyl-CoA biosynthesis; acetyl-CoA from acetate: step 1/2. Catalyzes the formation of acetyl phosphate from acetate and ATP. Can also catalyze the reverse reaction. The sequence is that of Acetate kinase from Methanosarcina mazei (strain ATCC BAA-159 / DSM 3647 / Goe1 / Go1 / JCM 11833 / OCM 88) (Methanosarcina frisia).